We begin with the raw amino-acid sequence, 477 residues long: Glutamate--tRNA ligase 2 (477 aa).

The 'HIGH' region motif lies at 12–22 (PSPTGRMHLGN). Zn(2+) is bound by residues Cys109, Cys111, Cys136, and His138. The 'KMSKS' region signature appears at 253–257 (PLSKR). Lys256 serves as a coordination point for ATP.

The protein belongs to the class-I aminoacyl-tRNA synthetase family. Glutamate--tRNA ligase type 1 subfamily. In terms of assembly, monomer. Zn(2+) serves as cofactor.

The protein resides in the cytoplasm. It catalyses the reaction tRNA(Glu) + L-glutamate + ATP = L-glutamyl-tRNA(Glu) + AMP + diphosphate. Catalyzes the attachment of glutamate to tRNA(Glu) in a two-step reaction: glutamate is first activated by ATP to form Glu-AMP and then transferred to the acceptor end of tRNA(Glu). The sequence is that of Glutamate--tRNA ligase 2 from Alkalilimnicola ehrlichii (strain ATCC BAA-1101 / DSM 17681 / MLHE-1).